Reading from the N-terminus, the 469-residue chain is Hydrogen cyanide synthase subunit HcnB (469 aa).

In terms of assembly, heterotrimer of HcnA, HcnB and HcnC.

It is found in the cell membrane. The enzyme catalyses glycine + 2 A = hydrogen cyanide + 2 AH2 + CO2. Its function is as follows. A three-component membrane-bound flavoenzyme that catalyzes the formation of hydrogen cyanide, a secondary metabolite, by transfer of electrons to a cyanide-resistant branch of the aerobic respiratory chain. Contributes to suppression of black root rot of tobacco. The polypeptide is Hydrogen cyanide synthase subunit HcnB (Pseudomonas protegens (strain DSM 19095 / LMG 27888 / CFBP 6595 / CHA0)).